Here is a 238-residue protein sequence, read N- to C-terminus: End-binding protein 1 (238 aa).

One can recognise a Calponin-homology (CH) domain in the interval 15–117 (FVGRVSLLKW…FFQWFKWFFD (103 aa)). Positions 101-238 (KYMDNFEFFQ…EDILYAEYHQ (138 aa)) are interaction with aurora kinase. Positions 124-165 (KSGATESGSANAVTKTSKPGNRSGSTAASMQNPKASSTSGPS) are enriched in polar residues. The disordered stretch occupies residues 124–169 (KSGATESGSANAVTKTSKPGNRSGSTAASMQNPKASSTSGPSIDSK). A Phosphoserine modification is found at S148. The EB1 C-terminal domain occupies 156–238 (PKASSTSGPS…EDILYAEYHQ (83 aa)).

It belongs to the MAPRE family. Homodimer; disulfide-linked and via interaction of the C-terminal EB1-specific domains. Interacts with BOP1 (via C-terminal WD repeats). Interacts with giardin subunit gamma, neurogenic locus notch homolog protein, GL50803_8358 and GL50803_11327. Interacts (via C-terminal residues 101-238) with aurora kinase. Interacts with tubulin gamma chain. Post-translationally, phosphorylated in vitro by aurora kinase. Phosphorylation is important for cell division.

Its subcellular location is the nucleus membrane. The protein localises to the cytoplasm. It is found in the cytoskeleton. It localises to the spindle. The protein resides in the nucleus envelope. Its subcellular location is the flagellum axoneme. The protein localises to the cell projection. It is found in the cilium. It localises to the flagellum. Its function is as follows. Involved in cell division. Involved in mitosis. Regulates dynamics of microtubules (MTs) during mitosis. Required for cytokinesis. Binds polymerized MTs in vitro. Is able to rescue a mitotic division defect, the proper positioning of the nucleus, of the S.cerevisiae BIM1 knockout mutant in a complementation assay. May play a role in spindle positioning and MT distribution. May be involved in MT nucleation for the formation of median bodies and in the biogenesis of flagella. Based on its localization to both the flagellar exit point and the distal flagellar tips, it may mediate the transition from anterograde to retrograde intraflagellar transport (IFT). This is End-binding protein 1 from Giardia intestinalis (strain ATCC 50803 / WB clone C6) (Giardia lamblia).